A 635-amino-acid chain; its full sequence is Phosphatidylserine decarboxylase proenzyme 3 (635 aa).

Positions 1–42 (MGNGNSTETKESRRSKMRKKIQNFRSRRRLSRPGSGSVSGLA) are disordered. A lipid anchor (N-myristoyl glycine) is attached at Gly-2. Residues 15 to 31 (SKMRKKIQNFRSRRRLS) are compositionally biased toward basic residues. The C2 domain maps to 22 to 147 (QNFRSRRRLS…VVQEPDSTCK (126 aa)). 2 EF-hand domains span residues 180–210 (AKRILSIVDYDEDGKLSFSEFSDLMNAFGNV) and 211–246 (VAANKKEELFKAADLNGDGVVTIDELAALLAVQQEQ). 9 residues coordinate Ca(2+): Asp-188, Asp-190, Asp-192, Lys-194, Glu-199, Asp-224, Asn-226, Asp-228, and Glu-235. Residues Asp-442, His-498, and Ser-586 each act as charge relay system; for autoendoproteolytic cleavage activity in the active site. Residue Ser-586 is the Schiff-base intermediate with substrate; via pyruvic acid; for decarboxylase activity of the active site. Ser-586 carries the post-translational modification Pyruvic acid (Ser); by autocatalysis.

It belongs to the phosphatidylserine decarboxylase family. PSD-B subfamily. Eukaryotic type II sub-subfamily. As to quaternary structure, heterodimer of a large membrane-associated beta subunit and a small pyruvoyl-containing alpha subunit. The cofactor is pyruvate. In terms of processing, is synthesized initially as an inactive proenzyme. Formation of the active enzyme involves a self-maturation process in which the active site pyruvoyl group is generated from an internal serine residue via an autocatalytic post-translational modification. Two non-identical subunits are generated from the proenzyme in this reaction, and the pyruvate is formed at the N-terminus of the alpha chain, which is derived from the carboxyl end of the proenzyme. The autoendoproteolytic cleavage occurs by a canonical serine protease mechanism, in which the side chain hydroxyl group of the serine supplies its oxygen atom to form the C-terminus of the beta chain, while the remainder of the serine residue undergoes an oxidative deamination to produce ammonia and the pyruvoyl prosthetic group on the alpha chain. During this reaction, the Ser that is part of the protease active site of the proenzyme becomes the pyruvoyl prosthetic group, which constitutes an essential element of the active site of the mature decarboxylase. In terms of tissue distribution, expressed in roots, leaves, stems and flowers.

The protein resides in the endoplasmic reticulum membrane. It carries out the reaction a 1,2-diacyl-sn-glycero-3-phospho-L-serine + H(+) = a 1,2-diacyl-sn-glycero-3-phosphoethanolamine + CO2. Its pathway is phospholipid metabolism; phosphatidylethanolamine biosynthesis; phosphatidylethanolamine from CDP-diacylglycerol: step 2/2. Functionally, catalyzes the formation of phosphatidylethanolamine (PtdEtn) from phosphatidylserine (PtdSer). Plays a central role in phospholipid metabolism and in the interorganelle trafficking of phosphatidylserine. Contributes only to a minor proportion of PtdEtn production. The protein is Phosphatidylserine decarboxylase proenzyme 3 (PSD3) of Arabidopsis thaliana (Mouse-ear cress).